A 548-amino-acid chain; its full sequence is T-complex protein 1 subunit theta (548 aa).

The residue at position 2 (Ala2) is an N-acetylalanine. Ser23 carries the phosphoserine modification. Residue Tyr30 is modified to Phosphotyrosine. The ADP site is built by Tyr47 and Gly48. Residue Asp99 coordinates Mg(2+). The ADP site is built by Gly100, Thr101, Asn102, and Phe103. ATP-binding residues include Gly100, Thr101, and Asn102. Ser162 carries the post-translational modification Phosphoserine. The ADP site is built by Met169, Ser170, and Lys171. Positions 170 and 171 each coordinate ATP. Residues Lys224, Lys254, and Lys260 each participate in a glycyl lysine isopeptide (Lys-Gly) (interchain with G-Cter in SUMO2) cross-link. Residues Ser269 and Ser317 each carry the phosphoserine modification. Residues Lys318 and Lys400 each carry the N6-acetyllysine modification. Residue Gly412 participates in ADP binding. Gly412 serves as a coordination point for ATP. A Glycyl lysine isopeptide (Lys-Gly) (interchain with G-Cter in SUMO1) cross-link involves residue Lys459. At Lys466 the chain carries N6-acetyllysine. Position 499 (Asp499) interacts with ADP. Residues Asp499 and Lys504 each coordinate ATP. Phosphotyrosine is present on Tyr505. The disordered stretch occupies residues 529 to 548; the sequence is PAGGPKPPSGKKDWDEDQND. A Glycyl lysine isopeptide (Lys-Gly) (interchain with G-Cter in SUMO2) cross-link involves residue Lys534. Ser537 bears the Phosphoserine mark. Lys539 participates in a covalent cross-link: Glycyl lysine isopeptide (Lys-Gly) (interchain with G-Cter in SUMO2).

This sequence belongs to the TCP-1 chaperonin family. Component of the chaperonin-containing T-complex (TRiC), a hexadecamer composed of two identical back-to-back stacked rings enclosing a protein folding chamber. Each ring is made up of eight different subunits: TCP1/CCT1, CCT2, CCT3, CCT4, CCT5, CCT6A/CCT6, CCT7, CCT8. Interacts with PACRG. Interacts with DNAAF4. Interacts with synaptic plasticity regulator PANTS.

Its subcellular location is the cytoplasm. The protein resides in the cytoskeleton. It is found in the microtubule organizing center. It localises to the centrosome. The protein localises to the cilium basal body. It catalyses the reaction ATP + H2O = ADP + phosphate + H(+). Functionally, component of the chaperonin-containing T-complex (TRiC), a molecular chaperone complex that assists the folding of actin, tubulin and other proteins upon ATP hydrolysis. The TRiC complex mediates the folding of WRAP53/TCAB1, thereby regulating telomere maintenance. As part of the TRiC complex may play a role in the assembly of BBSome, a complex involved in ciliogenesis regulating transports vesicles to the cilia. The sequence is that of T-complex protein 1 subunit theta (CCT8) from Bos taurus (Bovine).